The chain runs to 327 residues: MLNDFQVFDYEDIQLIPAKCVVKSRAEADTRVKFGNHTFRLPVVPSNMQTIIDESVAEELARGGYFYIMHRFDEEGRKPFVKQMHEKGLIASISVGVKDYEYDFVSSLKEDAPEYITIDIAHGHSDSVIKMIQHIKKELPETFVIAGNVGTPEAVRELENAGADATKVGIGPGKVCITKVKTGFGTGGWQLSALRWCSKVARKPIIADGGIRTHGDIAKSIRFGASMVMIGSLFAGHIESPGETIEIDGDKFKEYYGSASEYQKGAYKNVEGKKILLPAKGHLQDTLTEMEQDLQSSISYAGGRDLHSLTRVDYVIVKNSIWNGDAH.

Cysteine 176 acts as the Thioimidate intermediate in catalysis. An NADP(+)-binding site is contributed by 205–228 (IIADGGIRTHGDIAKSIRFGASMV).

The protein belongs to the IMPDH/GMPR family. GuaC type 2 subfamily.

The enzyme catalyses IMP + NH4(+) + NADP(+) = GMP + NADPH + 2 H(+). Catalyzes the irreversible NADPH-dependent deamination of GMP to IMP. It functions in the conversion of nucleobase, nucleoside and nucleotide derivatives of G to A nucleotides, and in maintaining the intracellular balance of A and G nucleotides. This chain is GMP reductase, found in Streptococcus gordonii (strain Challis / ATCC 35105 / BCRC 15272 / CH1 / DL1 / V288).